The sequence spans 844 residues: DNA mismatch repair protein MutS (844 aa).

602–609 (GPNMSGKS) provides a ligand contact to ATP.

Belongs to the DNA mismatch repair MutS family.

This protein is involved in the repair of mismatches in DNA. It is possible that it carries out the mismatch recognition step. This protein has a weak ATPase activity. The sequence is that of DNA mismatch repair protein MutS from Streptococcus pneumoniae serotype 19F (strain G54).